A 211-amino-acid polypeptide reads, in one-letter code: ATP phosphoribosyltransferase (211 aa).

Belongs to the ATP phosphoribosyltransferase family. Short subfamily. As to quaternary structure, heteromultimer composed of HisG and HisZ subunits.

The protein localises to the cytoplasm. The catalysed reaction is 1-(5-phospho-beta-D-ribosyl)-ATP + diphosphate = 5-phospho-alpha-D-ribose 1-diphosphate + ATP. It participates in amino-acid biosynthesis; L-histidine biosynthesis; L-histidine from 5-phospho-alpha-D-ribose 1-diphosphate: step 1/9. In terms of biological role, catalyzes the condensation of ATP and 5-phosphoribose 1-diphosphate to form N'-(5'-phosphoribosyl)-ATP (PR-ATP). Has a crucial role in the pathway because the rate of histidine biosynthesis seems to be controlled primarily by regulation of HisG enzymatic activity. The polypeptide is ATP phosphoribosyltransferase (Pseudomonas syringae pv. syringae (strain B728a)).